The following is a 208-amino-acid chain: Ribosomal RNA large subunit methyltransferase E (208 aa).

Positions 62, 64, 82, 98, and 123 each coordinate S-adenosyl-L-methionine. The Proton acceptor role is filled by Lys-163.

It belongs to the class I-like SAM-binding methyltransferase superfamily. RNA methyltransferase RlmE family.

It is found in the cytoplasm. It carries out the reaction uridine(2552) in 23S rRNA + S-adenosyl-L-methionine = 2'-O-methyluridine(2552) in 23S rRNA + S-adenosyl-L-homocysteine + H(+). In terms of biological role, specifically methylates the uridine in position 2552 of 23S rRNA at the 2'-O position of the ribose in the fully assembled 50S ribosomal subunit. The polypeptide is Ribosomal RNA large subunit methyltransferase E (Actinobacillus succinogenes (strain ATCC 55618 / DSM 22257 / CCUG 43843 / 130Z)).